The following is a 326-amino-acid chain: Pyruvate dehydrogenase E1 component subunit beta (326 aa).

A thiamine diphosphate-binding site is contributed by glutamate 62.

As to quaternary structure, heterodimer of an alpha and a beta chain. Thiamine diphosphate is required as a cofactor.

It catalyses the reaction N(6)-[(R)-lipoyl]-L-lysyl-[protein] + pyruvate + H(+) = N(6)-[(R)-S(8)-acetyldihydrolipoyl]-L-lysyl-[protein] + CO2. Its function is as follows. The pyruvate dehydrogenase complex catalyzes the overall conversion of pyruvate to acetyl-CoA and CO(2). It contains multiple copies of three enzymatic components: pyruvate dehydrogenase (E1), dihydrolipoamide acetyltransferase (E2) and lipoamide dehydrogenase (E3). This chain is Pyruvate dehydrogenase E1 component subunit beta (pdhB), found in Mycoplasma genitalium (strain ATCC 33530 / DSM 19775 / NCTC 10195 / G37) (Mycoplasmoides genitalium).